A 457-amino-acid chain; its full sequence is Multidrug resistance protein MdtK (457 aa).

A run of 12 helical transmembrane segments spans residues 11 to 31 (LLAL…MGFV), 53 to 73 (IWLP…PVIA), 93 to 113 (WLAS…GYII), 127 to 147 (AVGY…FQVA), 160 to 180 (GMVM…IFIY), 188 to 208 (LGGI…FIAM), 243 to 263 (LPIA…ALLV), 276 to 296 (IALN…AAVT), 314 to 334 (AART…IFTV), 357 to 377 (LMLL…GSGI), 387 to 407 (IFFI…YILA), and 418 to 438 (PAGF…LMML).

This sequence belongs to the multi antimicrobial extrusion (MATE) (TC 2.A.66.1) family. MdtK subfamily.

It is found in the cell inner membrane. Its function is as follows. Multidrug efflux pump that functions probably as a Na(+)/drug antiporter. This chain is Multidrug resistance protein MdtK, found in Salmonella arizonae (strain ATCC BAA-731 / CDC346-86 / RSK2980).